Consider the following 144-residue polypeptide: Austinoid biosynthesis clusters protein S (144 aa).

This sequence belongs to the trt14 isomerase family. Homodimer.

Its pathway is secondary metabolite biosynthesis; terpenoid biosynthesis. Part of the gene cluster B that mediates the biosynthesis of the fungal meroterpenoid acetoxydehydroaustin. The first step of the pathway is the synthesis of 3,5-dimethylorsellinic acid by the polyketide synthase ausA. 3,5-dimethylorsellinic acid is then prenylated by the polyprenyl transferase ausN. Further epoxidation by the FAD-dependent monooxygenase ausM and cyclization by the probable terpene cyclase ausL lead to the formation of protoaustinoid A. Protoaustinoid A is then oxidized to spiro-lactone preaustinoid A3 by the combined action of the FAD-binding monooxygenases ausB and ausC, and the dioxygenase ausE. Acid-catalyzed keto-rearrangement and ring contraction of the tetraketide portion of preaustinoid A3 by ausJ lead to the formation of preaustinoid A4. The aldo-keto reductase ausK, with the help of ausH, is involved in the next step by transforming preaustinoid A4 into isoaustinone which is in turn hydroxylated by the P450 monooxygenase ausI to form austinolide. The cytochrome P450 monooxygenase ausG then modifies austinolide to austinol. Austinol is further acetylated to austin by the O-acetyltransferase ausP, which spontaneously changes to dehydroaustin. The cytochrome P450 monooxygenase then converts dehydroaustin is into 7-dehydrodehydroaustin. The hydroxylation catalyzed by ausR permits the second O-acetyltransferase ausQ to add an additional acetyl group to the molecule, leading to the formation of acetoxydehydroaustin. Due to genetic rearrangements of the clusters and the subsequent loss of some enzymes, the end product of the Penicillium brasilianum austinoid biosynthesis clusters is acetoxydehydroaustin. AusS is necessary for austinoids production and may play a possible function as a regulator. The protein is Austinoid biosynthesis clusters protein S of Penicillium brasilianum.